The following is a 132-amino-acid chain: MWNEFKKFAFKGNVIDLAVGVVIGAAFGKIVSSLVKDIITPLLGMVLGGVDFTDLKITFGKSSIMYGNFIQTIFDFLIIAAAIFMFVKVFNKLTSKREEEKEEEIPEPTKEEEILGEIRDLLKQQNSSKDRA.

Transmembrane regions (helical) follow at residues V14 to L34 and G67 to V87.

Belongs to the MscL family. As to quaternary structure, homopentamer.

It localises to the cell membrane. In terms of biological role, channel that opens in response to stretch forces in the membrane lipid bilayer. May participate in the regulation of osmotic pressure changes within the cell. The chain is Large-conductance mechanosensitive channel from Bacillus cereus (strain AH820).